An 82-amino-acid chain; its full sequence is Omega-conotoxin-like 9 (82 aa).

Residues 1–22 form the signal peptide; it reads MKLTCMMIAAVLFLTTWTFVTA. The propeptide occupies 23-51; sequence DDSRYGLKNLFPKARHEMKNPEASKLNKR. Cystine bridges form between Cys-54/Cys-69, Cys-61/Cys-73, and Cys-68/Cys-77.

The protein belongs to the conotoxin O1 superfamily. Expressed by the venom duct.

The protein localises to the secreted. Omega-conotoxins act at presynaptic membranes, they bind and block voltage-gated calcium channels (Cav). This Conus striatus (Striated cone) protein is Omega-conotoxin-like 9.